A 145-amino-acid chain; its full sequence is MIALIQRVTRASVTVEGEVTGEIGAGLLVLLGVEKDDDEQKANRLCERVLGYRIFSDVEGKMNLNVQQAGGSVLVVSQFTLAADTERGMRPSFSKGASPDRAEALYDYFVERCRQQEMNTQTGRFAADMQVSLVNDGPVTFWLQV.

The short motif at 137–138 (GP) is the Gly-cisPro motif, important for rejection of L-amino acids element.

The protein belongs to the DTD family. In terms of assembly, homodimer.

It localises to the cytoplasm. The enzyme catalyses glycyl-tRNA(Ala) + H2O = tRNA(Ala) + glycine + H(+). It catalyses the reaction a D-aminoacyl-tRNA + H2O = a tRNA + a D-alpha-amino acid + H(+). Its function is as follows. An aminoacyl-tRNA editing enzyme that deacylates mischarged D-aminoacyl-tRNAs. Also deacylates mischarged glycyl-tRNA(Ala), protecting cells against glycine mischarging by AlaRS. Acts via tRNA-based rather than protein-based catalysis; rejects L-amino acids rather than detecting D-amino acids in the active site. By recycling D-aminoacyl-tRNA to D-amino acids and free tRNA molecules, this enzyme counteracts the toxicity associated with the formation of D-aminoacyl-tRNA entities in vivo and helps enforce protein L-homochirality. The sequence is that of D-aminoacyl-tRNA deacylase from Escherichia coli O7:K1 (strain IAI39 / ExPEC).